A 237-amino-acid chain; its full sequence is Maternal B9.10 protein (237 aa).

It belongs to the BTG family.

This is Maternal B9.10 protein from Xenopus laevis (African clawed frog).